The sequence spans 247 residues: Oocyte zinc finger protein XlCOF20 (247 aa).

8 C2H2-type zinc fingers span residues 6–28 (YDCRECGKRYTKRNNLYIHQRVH), 34–56 (FPCTECGKGFSHKSQLIIHQRVH), 62–84 (FICSECGKGFSKNYGLILHLRVH), 90–112 (FVCTECGQRFSKNNVLSMHQRVH), 118–140 (FTCTECGKRFSQKRQLNLHLRVH), 146–168 (FVCTECGKRFSKNDVLLIHLRVH), 174–196 (FMCADCGRCFSVSSSLKYHQRIC), and 225–247 (QSCAECGKCFSSNYNLSLHMRVH).

Belongs to the krueppel C2H2-type zinc-finger protein family.

Its subcellular location is the nucleus. Its function is as follows. May be involved in transcriptional regulation. This is Oocyte zinc finger protein XlCOF20 from Xenopus laevis (African clawed frog).